The primary structure comprises 324 residues: Transcription factor TCP24 (324 aa).

Positions Gly50–Leu108 constitute a TCP domain. 2 disordered regions span residues Gln122–His215 and Gln261–Leu297. Over residues Ser127–Ser142 the composition is skewed to low complexity. The R domain occupies Thr144 to Arg162. Basic and acidic residues predominate over residues Thr144 to Gln167. Polar residues-rich tracts occupy residues Asn168 to Gly192 and Val200 to Pro212. Residues Gln261–Ser281 are compositionally biased toward low complexity.

Forms a heterodimeric complex with ABAP1. Interacts with SPL. As to expression, expressed in cotyledons, particularly in the vascular region, in leaves, roots, stems, buds, flowers and siliques.

The protein resides in the nucleus. Its function is as follows. Plays a pivotal role in the control of morphogenesis of shoot organs by negatively regulating the expression of boundary-specific genes such as CUC genes, probably through the induction of miRNA (e.g. miR164). In association with ABAP1, exerts a negative role in cell proliferation in leaves, possibly by inhibiting mitotic DNA replication. Participates in ovule development. The chain is Transcription factor TCP24 (TCP24) from Arabidopsis thaliana (Mouse-ear cress).